We begin with the raw amino-acid sequence, 457 residues long: Argininosuccinate lyase (457 aa).

The protein belongs to the lyase 1 family. Argininosuccinate lyase subfamily.

Its subcellular location is the cytoplasm. It catalyses the reaction 2-(N(omega)-L-arginino)succinate = fumarate + L-arginine. It participates in amino-acid biosynthesis; L-arginine biosynthesis; L-arginine from L-ornithine and carbamoyl phosphate: step 3/3. This is Argininosuccinate lyase from Erwinia tasmaniensis (strain DSM 17950 / CFBP 7177 / CIP 109463 / NCPPB 4357 / Et1/99).